The chain runs to 375 residues: Probable aspartate aminotransferase (375 aa).

L-aspartate contacts are provided by Gly31 and Asn165. Lys223 carries the N6-(pyridoxal phosphate)lysine modification. Residue Arg353 coordinates L-aspartate.

This sequence belongs to the class-I pyridoxal-phosphate-dependent aminotransferase family. In terms of assembly, homodimer. It depends on pyridoxal 5'-phosphate as a cofactor.

The protein resides in the cytoplasm. It carries out the reaction L-aspartate + 2-oxoglutarate = oxaloacetate + L-glutamate. In Methanocaldococcus jannaschii (strain ATCC 43067 / DSM 2661 / JAL-1 / JCM 10045 / NBRC 100440) (Methanococcus jannaschii), this protein is Probable aspartate aminotransferase.